The chain runs to 282 residues: Endo-1,4-beta-xylanase B (282 aa).

An N-terminal signal peptide occupies residues 1–39 (MGISSILLSALIAGGALALPAAEPVSFDIRDENITLARR). N33 is a glycosylation site (N-linked (GlcNAc...) asparagine). The 180-residue stretch at 40-219 (AEAINYNQDY…GSGSGQISLS (180 aa)) folds into the GH11 domain. E117 functions as the Nucleophile in the catalytic mechanism. The active-site Proton donor is E206. The tract at residues 214–245 (GQISLSKGTGGGSTTTTPTGPTSTSTAPSSGG) is disordered. Low complexity predominate over residues 227-243 (TTTTPTGPTSTSTAPSS). The CBM1 domain occupies 246 to 282 (TGAAQWGQCGGIGWTGPTTCVAPYTCKYENAYYSQCQ).

It belongs to the glycosyl hydrolase 11 (cellulase G) family.

Its subcellular location is the secreted. It carries out the reaction Endohydrolysis of (1-&gt;4)-beta-D-xylosidic linkages in xylans.. The protein operates within glycan degradation; xylan degradation. Significantly inhibited by the wheat xylanase inhibiting protein I (XIP-I) and the proteinaceous endoxylanase Triticum aestivum xylanase inhibitors I (TAXI-I), but not TAXI-II. In terms of biological role, endo-1,4-beta-xylanase involved in the hydrolysis of xylan, a major structural heterogeneous polysaccharide found in plant biomass representing the second most abundant polysaccharide in the biosphere, after cellulose. This Talaromyces funiculosus (Fruitlet core rot fungus) protein is Endo-1,4-beta-xylanase B (xynB).